Consider the following 190-residue polypeptide: ADP-ribosylation factor F (190 aa).

GTP contacts are provided by residues 34–40 (DGAGKST), 75–79 (DIGGQ), and 136–139 (NKQD).

It belongs to the small GTPase superfamily. Arf family.

It is found in the golgi apparatus. Functionally, GTP-binding protein that may be involved in protein trafficking. May modulate vesicle budding and uncoating within the Golgi apparatus. This is ADP-ribosylation factor F (arrF) from Dictyostelium discoideum (Social amoeba).